The following is a 409-amino-acid chain: Dihydrolipoyllysine-residue succinyltransferase component of 2-oxoglutarate dehydrogenase complex (409 aa).

The region spanning 2 to 77 (AIEIKAPTFP…LSNELLGKLN (76 aa)) is the Lipoyl-binding domain. At Lys-43 the chain carries N6-lipoyllysine. The 38-residue stretch at 112–149 (ILSPAARKLAEEAGIDPNSIAGTGKGGRVTKEDVVAAV) folds into the Peripheral subunit-binding (PSBD) domain. Residues His-380 and Asp-384 contribute to the active site.

Belongs to the 2-oxoacid dehydrogenase family. Forms a 24-polypeptide structural core with octahedral symmetry. Part of the 2-oxoglutarate dehydrogenase (OGDH) complex composed of E1 (2-oxoglutarate dehydrogenase), E2 (dihydrolipoamide succinyltransferase) and E3 (dihydrolipoamide dehydrogenase); the complex contains multiple copies of the three enzymatic components (E1, E2 and E3). It depends on (R)-lipoate as a cofactor.

It catalyses the reaction N(6)-[(R)-dihydrolipoyl]-L-lysyl-[protein] + succinyl-CoA = N(6)-[(R)-S(8)-succinyldihydrolipoyl]-L-lysyl-[protein] + CoA. It functions in the pathway amino-acid degradation; L-lysine degradation via saccharopine pathway; glutaryl-CoA from L-lysine: step 6/6. Functionally, E2 component of the 2-oxoglutarate dehydrogenase (OGDH) complex which catalyzes the second step in the conversion of 2-oxoglutarate to succinyl-CoA and CO(2). The sequence is that of Dihydrolipoyllysine-residue succinyltransferase component of 2-oxoglutarate dehydrogenase complex (sucB) from Pseudomonas aeruginosa (strain ATCC 15692 / DSM 22644 / CIP 104116 / JCM 14847 / LMG 12228 / 1C / PRS 101 / PAO1).